We begin with the raw amino-acid sequence, 185 residues long: Urease accessory protein UreE (185 aa).

The tract at residues 153–185 is disordered; it reads LRANSAQGHGHSHSHSHDHHGYHHHGDGHWHKH. The span at 162–175 shows a compositional bias: basic residues; that stretch reads GHSHSHSHDHHGYH. Residues 176-185 show a composition bias toward basic and acidic residues; the sequence is HHGDGHWHKH.

Belongs to the UreE family.

The protein resides in the cytoplasm. Involved in urease metallocenter assembly. Binds nickel. Probably functions as a nickel donor during metallocenter assembly. The chain is Urease accessory protein UreE from Haemophilus influenzae (strain PittEE).